Consider the following 208-residue polypeptide: Ribosomal RNA large subunit methyltransferase E (208 aa).

Residues glycine 63, tryptophan 65, aspartate 83, aspartate 99, and aspartate 124 each contribute to the S-adenosyl-L-methionine site. The Proton acceptor role is filled by lysine 164.

Belongs to the class I-like SAM-binding methyltransferase superfamily. RNA methyltransferase RlmE family.

The protein resides in the cytoplasm. It carries out the reaction uridine(2552) in 23S rRNA + S-adenosyl-L-methionine = 2'-O-methyluridine(2552) in 23S rRNA + S-adenosyl-L-homocysteine + H(+). Its function is as follows. Specifically methylates the uridine in position 2552 of 23S rRNA at the 2'-O position of the ribose in the fully assembled 50S ribosomal subunit. The protein is Ribosomal RNA large subunit methyltransferase E of Hamiltonella defensa subsp. Acyrthosiphon pisum (strain 5AT).